We begin with the raw amino-acid sequence, 205 residues long: Ras-related protein rab-6.1 (205 aa).

Residues 18-25 (GEQSVGKT), Thr-43, 66-70 (DTAGQ), and 124-127 (NKTD) each bind GTP. S-geranylgeranyl cysteine attachment occurs at residues Cys-203 and Cys-205. Cys-205 bears the Cysteine methyl ester mark.

The protein belongs to the small GTPase superfamily. Rab family. In terms of assembly, interacts with GARP complex component vps-52. Highly expressed in body wall muscle, intestine, somatic gonad, distal tip cells, vulva, and neurons including AVB, AVD, RIG, and PVC (at protein level). Not expressed in AVA and RMDV neurons.

It is found in the cell membrane. The protein resides in the cell projection. It localises to the dendrite. Its subcellular location is the perikaryon. The protein localises to the golgi apparatus. It is found in the cytoplasmic vesicle. The protein resides in the secretory vesicle. In terms of biological role, the small GTPases Rab are key regulators of intracellular membrane trafficking, from the formation of transport vesicles to their fusion with membranes. Rabs cycle between an inactive GDP-bound form and an active GTP-bound form that is able to recruit to membranes different set of downstream effectors directly responsible for vesicle formation, movement, tethering and fusion. In its active GTP-bound form, acts redundantly with rab-6.2 (in its active GTP-bound form) to positively regulate the retrograde trafficking of cargo molecules from endosomes to Golgi structures. Required for the retrograde trafficking of glr-1, a subunit of AMPA-type glutamate receptors (AMPRs), out of early endosomes and into the Golgi compartment in neurons. Together with rab-6.2, promotes the retrograde trafficking of mig-14 from endosomes to Golgi structures in the intestine. In oocytes, in its active GTP-bound form, involved in the membrane fusion and exocytosis of secretory vesicles (cortical granules) to play a role in the remodeling of the embryo surface following fertilization. Recruits sep-1 to cortical granules (derived from the Golgi complex) for exocytosis during the oocyte-to-embryo transition. Required for seam cell division and alae formation. Promotes spontaneous reversals in locomotion. The polypeptide is Ras-related protein rab-6.1 (Caenorhabditis elegans).